Consider the following 487-residue polypeptide: 3-octaprenyl-4-hydroxybenzoate carboxy-lyase (487 aa).

Asparagine 172 is a binding site for Mn(2+). Prenylated FMN is bound by residues 175–177 (IYR), 189–191 (RWL), and 194–195 (RG). A Mn(2+)-binding site is contributed by glutamate 238. Catalysis depends on aspartate 287, which acts as the Proton donor.

This sequence belongs to the UbiD family. Homohexamer. Prenylated FMN is required as a cofactor. Requires Mn(2+) as cofactor.

It localises to the cell membrane. The enzyme catalyses a 4-hydroxy-3-(all-trans-polyprenyl)benzoate + H(+) = a 2-(all-trans-polyprenyl)phenol + CO2. Its pathway is cofactor biosynthesis; ubiquinone biosynthesis. Its function is as follows. Catalyzes the decarboxylation of 3-octaprenyl-4-hydroxy benzoate to 2-octaprenylphenol, an intermediate step in ubiquinone biosynthesis. The sequence is that of 3-octaprenyl-4-hydroxybenzoate carboxy-lyase from Nitrosococcus oceani (strain ATCC 19707 / BCRC 17464 / JCM 30415 / NCIMB 11848 / C-107).